The primary structure comprises 531 residues: 2-isopropylmalate synthase (531 aa).

The Pyruvate carboxyltransferase domain occupies isoleucine 8 to tyrosine 284. Aspartate 17, histidine 208, histidine 210, and asparagine 244 together coordinate Mn(2+). A regulatory domain region spans residues arginine 408–alanine 531.

The protein belongs to the alpha-IPM synthase/homocitrate synthase family. LeuA type 1 subfamily. In terms of assembly, homodimer. Mn(2+) serves as cofactor.

It localises to the cytoplasm. The catalysed reaction is 3-methyl-2-oxobutanoate + acetyl-CoA + H2O = (2S)-2-isopropylmalate + CoA + H(+). The protein operates within amino-acid biosynthesis; L-leucine biosynthesis; L-leucine from 3-methyl-2-oxobutanoate: step 1/4. Its function is as follows. Catalyzes the condensation of the acetyl group of acetyl-CoA with 3-methyl-2-oxobutanoate (2-ketoisovalerate) to form 3-carboxy-3-hydroxy-4-methylpentanoate (2-isopropylmalate). The protein is 2-isopropylmalate synthase of Nostoc sp. (strain PCC 7120 / SAG 25.82 / UTEX 2576).